A 1257-amino-acid polypeptide reads, in one-letter code: MGAESVWASGLLVLWLLLLVSGDQDTQDTTTTEKGLHMLKSGSGPIQAALAELVALPCFFTLQPRQSPLGDIPRIKWTKVQTASGQRQDLPILVAKDNVVRVAKGWQGRVSLPAYPRHRANATLLLGPLRASDSGLYRCQVVKGIEDEQDLVTLEVTGVVFHYRAARDRYALTFAEAQEACHLSSATIAAPRHLQAAFEDGFDNCDAGWLSDRTVRYPITQSRPGCYGDRSSLPGVRSYGRRDPQELYDVYCFARELGGEVFYVGPARRLTLAGARALCQRQGAALASVGQLHLAWHEGLDQCDPGWLADGSVRYPIQTPRRRCGGSAPGVRTVYRFANRTGFPAPGARFDAYCFRAHHHTPQRGDSEIPSSGDEGEIVSAEGPPAPELKPRLGEQEVITPDFQEPLVSSGEDEPLDLTRTQASQETLASTPGGPTLASWLLTGVTSSTGVPSPSSLGVDMEETTPSGTQVAPTPTMRRGRFKGLNGRHFQQQGPEDQLLEAAEASAQPPTLEVTADHMGPSAATEALESDQSHSPWAILTNEVDVPGAGSLGSRSLPESRKWSPSLISPSTVPSTDSTPGLKPGADEAPGVKSAIHHPPWLPSEPAVPSSIPSEALSAVSLQASPGDGSPDFPIVAMLRAPKLWLLPHSTLVPNVSPIPLSPASPLPSSVPEEQAVRPVSFGAEDPETPFQTTMAAPGEASHGSPEADSIEIEGISSMQATKHPISGPWASLDSSNVTVNPVPSDAGILGTESGVLDLPGSPTSDGQATVDMVLATWLPLPGHGLDTGSQSTPMEAHGVTMSVEPTVALEGGATKDPMEATMDVVPSTVDATSGSEPKSSISSTHVVVTAAGDQGTPTLTPTSSEGQVVAQESLGTLTSLPSHPWSSLASSMDEVASVSSGEPTRLWDIPSTLIPVSLGLDESDLKVVAESPGLEGFWEEVASGQEDPTDPCENNPCLHGGTCRTNGTMYGCSCDQGYAGENCEIDIDDCLCSPCENGGTCIDEVNGFICLCLPSYGGNLCEKDTEGCDRGWHKFQGHCYRYFAHRRAWEDAERDCRRRAGHLTSVHSPEEHKFINSFGHENSWIGLNDRTVERDFQWTDNTGLQYENWREKQPDNFFAGGEDCVVMVAHENGRWNDVPCNYNLPYVCKKGTVLCGPPPAVENASLVGVRKVKYNVHATVRYQCDEGFSQHHVATIRCRSNGKWDRPQIVCTKPRRSHRMRRHHHHPHRHHKPRKEHRKHKRHPAEDWEKDEGDFC.

Positions 1–22 (MGAESVWASGLLVLWLLLLVSG) are cleaved as a signal peptide. Residues 37-157 (HMLKSGSGPI…EQDLVTLEVT (121 aa)) form the Ig-like V-type domain. Intrachain disulfides connect Cys58–Cys139, Cys181–Cys252, Cys205–Cys226, Cys279–Cys354, and Cys303–Cys324. Asn121 carries an N-linked (GlcNAc...) asparagine glycan. Link domains follow at residues 159–254 (VVFH…YCFA) and 258–356 (GGEV…YCFR). Asn339 carries an N-linked (GlcNAc...) asparagine glycan. The segment at 361–391 (TPQRGDSEIPSSGDEGEIVSAEGPPAPELKP) is disordered. O-linked (Xyl...) (chondroitin sulfate) serine glycosylation is found at Ser380 and Ser410. Residues 447-459 (SSTGVPSPSSLGV) show a composition bias toward low complexity. Disordered regions lie at residues 447-493 (SSTG…FQQQ), 550-610 (GSLG…AVPS), and 683-707 (GAED…GSPE). Residues 464-473 (TTPSGTQVAP) are compositionally biased toward polar residues. The span at 569-580 (SPSTVPSTDSTP) shows a compositional bias: low complexity. Asn737 carries an N-linked (GlcNAc...) asparagine glycan. An O-linked (Xyl...) (chondroitin sulfate) serine glycan is attached at Ser944. Positions 949 to 985 (PTDPCENNPCLHGGTCRTNGTMYGCSCDQGYAGENCE) constitute an EGF-like 1 domain. Disulfide bonds link Cys953–Cys964, Cys958–Cys973, Cys975–Cys984, Cys991–Cys1002, Cys996–Cys1011, Cys1013–Cys1022, Cys1029–Cys1040, Cys1057–Cys1149, Cys1125–Cys1141, Cys1156–Cys1199, and Cys1185–Cys1212. N-linked (GlcNAc...) asparagine glycosylation is present at Asn967. Residues 987-1023 (DIDDCLCSPCENGGTCIDEVNGFICLCLPSYGGNLCE) enclose the EGF-like 2; calcium-binding domain. Residues 1025–1154 (DTEGCDRGWH…LPYVCKKGTV (130 aa)) enclose the C-type lectin domain. The Sushi domain occupies 1154 to 1214 (VLCGPPPAVE…WDRPQIVCTK (61 aa)). The N-linked (GlcNAc...) asparagine glycan is linked to Asn1164. Residues 1215 to 1244 (PRRSHRMRRHHHHPHRHHKPRKEHRKHKRH) show a composition bias toward basic residues. Residues 1215-1257 (PRRSHRMRRHHHHPHRHHKPRKEHRKHKRHPAEDWEKDEGDFC) form a disordered region.

It belongs to the aggrecan/versican proteoglycan family. In terms of processing, two isoforms were found that probably arise by proteolytic processing. The large isoform is predominant in early postnatal brain, the small isoform is found in adult brain. O-glycosylated; contains chondroitin sulfate. Early postnatal and adult brain; not expressed in kidney, lung, liver and muscle.

It localises to the secreted. In terms of biological role, may modulate neuronal adhesion and neurite growth during development by binding to neural cell adhesion molecules (NG-CAM and N-CAM). Chondroitin sulfate proteoglycan; binds to hyaluronic acid. This is Neurocan core protein (Ncan) from Rattus norvegicus (Rat).